Here is a 118-residue protein sequence, read N- to C-terminus: Large ribosomal subunit protein bL19 (118 aa).

The protein belongs to the bacterial ribosomal protein bL19 family.

This protein is located at the 30S-50S ribosomal subunit interface and may play a role in the structure and function of the aminoacyl-tRNA binding site. The protein is Large ribosomal subunit protein bL19 of Citrifermentans bemidjiense (strain ATCC BAA-1014 / DSM 16622 / JCM 12645 / Bem) (Geobacter bemidjiensis).